A 427-amino-acid polypeptide reads, in one-letter code: 3-phosphoshikimate 1-carboxyvinyltransferase (427 aa).

3-phosphoshikimate is bound by residues Lys-23, Ser-24, and Arg-28. Lys-23 provides a ligand contact to phosphoenolpyruvate. Phosphoenolpyruvate-binding residues include Gly-97 and Arg-125. Positions 170, 171, 172, 198, 314, 337, and 341 each coordinate 3-phosphoshikimate. Gln-172 lines the phosphoenolpyruvate pocket. Asp-314 acts as the Proton acceptor in catalysis. Residues Arg-345, Arg-387, and Lys-412 each coordinate phosphoenolpyruvate.

It belongs to the EPSP synthase family. As to quaternary structure, monomer.

Its subcellular location is the cytoplasm. It catalyses the reaction 3-phosphoshikimate + phosphoenolpyruvate = 5-O-(1-carboxyvinyl)-3-phosphoshikimate + phosphate. It functions in the pathway metabolic intermediate biosynthesis; chorismate biosynthesis; chorismate from D-erythrose 4-phosphate and phosphoenolpyruvate: step 6/7. Functionally, catalyzes the transfer of the enolpyruvyl moiety of phosphoenolpyruvate (PEP) to the 5-hydroxyl of shikimate-3-phosphate (S3P) to produce enolpyruvyl shikimate-3-phosphate and inorganic phosphate. The protein is 3-phosphoshikimate 1-carboxyvinyltransferase of Buchnera aphidicola subsp. Baizongia pistaciae (strain Bp).